A 169-amino-acid chain; its full sequence is Protein HIGH ARSENIC CONTENT 1, mitochondrial (169 aa).

The transit peptide at Met1 to Tyr59 directs the protein to the mitochondrion. The Rhodanese domain occupies Leu60–Lys153. Cys113 functions as the Cysteine persulfide intermediate in the catalytic mechanism.

In terms of tissue distribution, expressed in root hairs, epidermal cells at the surface of the root and in the pericycle within the stele.

It is found in the mitochondrion. It carries out the reaction [glutaredoxin]-dithiol + arsenate + glutathione + H(+) = glutathionyl-S-S-[glutaredoxin] + arsenite + H2O. Inhibited by trobenzenesulphonic acid (TNBS). Its function is as follows. Arsenate reductase critical for arsenic tolerance. Reduces arsenate to arsenite in the root, facilitating efflux of arsenic back into the soil to limit both its accumulation in the root and transport to the shoot. Essential for arsenite efflux from the root, but not necessary for arsenate uptake. In Arabidopsis thaliana (Mouse-ear cress), this protein is Protein HIGH ARSENIC CONTENT 1, mitochondrial.